A 495-amino-acid chain; its full sequence is uncharacterized protein (495 aa).

The CHY-type zinc finger occupies 389-457; the sequence is PLPNNGACEH…KDATCPHCGN (69 aa). Zn(2+) is bound by residues C396, H398, C410, C411, C417, C420, H421, H427, C437, C440, C452, and C455. Residues 473–483 show a composition bias toward basic and acidic residues; it reads GMRDRVRMSRK. A disordered region spans residues 473–495; sequence GMRDRVRMSRKDPRKYKRKHHGN. Positions 484-495 are enriched in basic residues; sequence DPRKYKRKHHGN.

It localises to the cytoplasm. This is an uncharacterized protein from Schizosaccharomyces pombe (strain 972 / ATCC 24843) (Fission yeast).